The following is a 423-amino-acid chain: Protein CLP1 homolog (423 aa).

ATP is bound by residues Glu-16, Lys-57, and 119 to 124 (DVGKST).

The protein belongs to the Clp1 family. Clp1 subfamily.

It localises to the nucleus. In terms of biological role, required for endonucleolytic cleavage during polyadenylation-dependent pre-mRNA 3'-end formation. This chain is Protein CLP1 homolog (cbc), found in Drosophila yakuba (Fruit fly).